We begin with the raw amino-acid sequence, 424 residues long: UDP-N-acetylglucosamine 1-carboxyvinyltransferase (424 aa).

Residue 22 to 23 (KN) coordinates phosphoenolpyruvate. Arginine 95 provides a ligand contact to UDP-N-acetyl-alpha-D-glucosamine. The active-site Proton donor is cysteine 119. Cysteine 119 carries the 2-(S-cysteinyl)pyruvic acid O-phosphothioketal modification. UDP-N-acetyl-alpha-D-glucosamine contacts are provided by residues 124-128 (RPVDQ), aspartate 311, and isoleucine 333.

The protein belongs to the EPSP synthase family. MurA subfamily.

The protein localises to the cytoplasm. It catalyses the reaction phosphoenolpyruvate + UDP-N-acetyl-alpha-D-glucosamine = UDP-N-acetyl-3-O-(1-carboxyvinyl)-alpha-D-glucosamine + phosphate. Its pathway is cell wall biogenesis; peptidoglycan biosynthesis. Its function is as follows. Cell wall formation. Adds enolpyruvyl to UDP-N-acetylglucosamine. The chain is UDP-N-acetylglucosamine 1-carboxyvinyltransferase from Polaromonas sp. (strain JS666 / ATCC BAA-500).